We begin with the raw amino-acid sequence, 91 residues long: DNA-directed RNA polymerase subunit omega (91 aa).

It belongs to the RNA polymerase subunit omega family. As to quaternary structure, the RNAP catalytic core consists of 2 alpha, 1 beta, 1 beta' and 1 omega subunit. When a sigma factor is associated with the core the holoenzyme is formed, which can initiate transcription.

It catalyses the reaction RNA(n) + a ribonucleoside 5'-triphosphate = RNA(n+1) + diphosphate. Promotes RNA polymerase assembly. Latches the N- and C-terminal regions of the beta' subunit thereby facilitating its interaction with the beta and alpha subunits. This chain is DNA-directed RNA polymerase subunit omega, found in Edwardsiella ictaluri (strain 93-146).